We begin with the raw amino-acid sequence, 115 residues long: Large ribosomal subunit protein bL20c (115 aa).

Belongs to the bacterial ribosomal protein bL20 family.

The protein resides in the plastid. The protein localises to the chloroplast. Binds directly to 23S ribosomal RNA and is necessary for the in vitro assembly process of the 50S ribosomal subunit. It is not involved in the protein synthesizing functions of that subunit. This chain is Large ribosomal subunit protein bL20c, found in Gnetum parvifolium (Small-leaved jointfir).